Reading from the N-terminus, the 112-residue chain is uncharacterized protein (112 aa).

A helical transmembrane segment spans residues 75–95; that stretch reads ILGVFGGFIYILTPLPIVSGF.

Its subcellular location is the membrane. This is an uncharacterized protein from Methanocaldococcus jannaschii (strain ATCC 43067 / DSM 2661 / JAL-1 / JCM 10045 / NBRC 100440) (Methanococcus jannaschii).